Reading from the N-terminus, the 72-residue chain is Translation initiation factor IF-1 (72 aa).

An S1-like domain is found at 1–72 (MAKEETIQMQ…SRARITFRAK (72 aa)).

This sequence belongs to the IF-1 family. In terms of assembly, component of the 30S ribosomal translation pre-initiation complex which assembles on the 30S ribosome in the order IF-2 and IF-3, IF-1 and N-formylmethionyl-tRNA(fMet); mRNA recruitment can occur at any time during PIC assembly.

Its subcellular location is the cytoplasm. Its function is as follows. One of the essential components for the initiation of protein synthesis. Stabilizes the binding of IF-2 and IF-3 on the 30S subunit to which N-formylmethionyl-tRNA(fMet) subsequently binds. Helps modulate mRNA selection, yielding the 30S pre-initiation complex (PIC). Upon addition of the 50S ribosomal subunit IF-1, IF-2 and IF-3 are released leaving the mature 70S translation initiation complex. The chain is Translation initiation factor IF-1 from Nitrosospira multiformis (strain ATCC 25196 / NCIMB 11849 / C 71).